The primary structure comprises 86 residues: Large ribosomal subunit protein bL27 (86 aa).

Residues Met1–Thr10 show a composition bias toward gly residues. A disordered region spans residues Met1 to Arg20.

The protein belongs to the bacterial ribosomal protein bL27 family.

This Bordetella avium (strain 197N) protein is Large ribosomal subunit protein bL27.